The primary structure comprises 528 residues: Linear element-associated protein hop1 (528 aa).

The HORMA domain occupies 11–212 (TKSDFTLKNL…RGEFKDIVSF (202 aa)). The segment at 334–385 (LLNCECGDSTEDSEMFQCERCDGWVHCACYGFESDSDPRQPNQLLCYTCLLV) adopts a PHD-type zinc-finger fold. Residues C337, C339, C351, C354, H359, C362, C379, and C382 each coordinate Zn(2+). The interval 507 to 528 (RPKKVSKTSNTKETDTMKPLRI) is disordered. Basic and acidic residues predominate over residues 516–528 (NTKETDTMKPLRI).

As to quaternary structure, interacts (via N-terminus) with rec10; the interaction is direct. Interacts (via C-terminus) with rec15 (via C-terminus); the interaction is direct.

It is found in the nucleus. The protein localises to the chromosome. In terms of biological role, facilitates initiation of meiotic recombination and DNA double-strand break (DSB) formation at DSB hotspot sites by enhancing the interaction between rec10 and rec15. This chain is Linear element-associated protein hop1, found in Schizosaccharomyces pombe (strain 972 / ATCC 24843) (Fission yeast).